The following is a 212-amino-acid chain: Protein-L-isoaspartate O-methyltransferase (212 aa).

Ser60 is a catalytic residue.

The protein belongs to the methyltransferase superfamily. L-isoaspartyl/D-aspartyl protein methyltransferase family.

The protein resides in the cytoplasm. It carries out the reaction [protein]-L-isoaspartate + S-adenosyl-L-methionine = [protein]-L-isoaspartate alpha-methyl ester + S-adenosyl-L-homocysteine. Functionally, catalyzes the methyl esterification of L-isoaspartyl residues in peptides and proteins that result from spontaneous decomposition of normal L-aspartyl and L-asparaginyl residues. It plays a role in the repair and/or degradation of damaged proteins. In Pseudomonas entomophila (strain L48), this protein is Protein-L-isoaspartate O-methyltransferase.